The sequence spans 364 residues: Probable dual-specificity RNA methyltransferase RlmN (364 aa).

Residue Glu-107 is the Proton acceptor of the active site. Positions His-113 to Asp-346 constitute a Radical SAM core domain. The cysteines at positions 120 and 351 are disulfide-linked. 3 residues coordinate [4Fe-4S] cluster: Cys-127, Cys-131, and Cys-134. S-adenosyl-L-methionine contacts are provided by residues Gly-177 to Glu-178, Ser-209, Ser-232 to His-234, and Asn-308. Cys-351 functions as the S-methylcysteine intermediate in the catalytic mechanism.

Belongs to the radical SAM superfamily. RlmN family. It depends on [4Fe-4S] cluster as a cofactor.

Its subcellular location is the cytoplasm. The catalysed reaction is adenosine(2503) in 23S rRNA + 2 reduced [2Fe-2S]-[ferredoxin] + 2 S-adenosyl-L-methionine = 2-methyladenosine(2503) in 23S rRNA + 5'-deoxyadenosine + L-methionine + 2 oxidized [2Fe-2S]-[ferredoxin] + S-adenosyl-L-homocysteine. It catalyses the reaction adenosine(37) in tRNA + 2 reduced [2Fe-2S]-[ferredoxin] + 2 S-adenosyl-L-methionine = 2-methyladenosine(37) in tRNA + 5'-deoxyadenosine + L-methionine + 2 oxidized [2Fe-2S]-[ferredoxin] + S-adenosyl-L-homocysteine. In terms of biological role, specifically methylates position 2 of adenine 2503 in 23S rRNA and position 2 of adenine 37 in tRNAs. Confers resistance to some classes of antibiotics. This Staphylococcus saprophyticus subsp. saprophyticus (strain ATCC 15305 / DSM 20229 / NCIMB 8711 / NCTC 7292 / S-41) protein is Probable dual-specificity RNA methyltransferase RlmN.